The primary structure comprises 337 residues: tRNA N6-adenosine threonylcarbamoyltransferase (337 aa).

2 residues coordinate Fe cation: His-111 and His-115. Substrate is bound by residues 134–138 (LVSGG), Asp-167, Gly-180, and Asn-272. Asp-300 contacts Fe cation.

The protein belongs to the KAE1 / TsaD family. The cofactor is Fe(2+).

It localises to the cytoplasm. It carries out the reaction L-threonylcarbamoyladenylate + adenosine(37) in tRNA = N(6)-L-threonylcarbamoyladenosine(37) in tRNA + AMP + H(+). Its function is as follows. Required for the formation of a threonylcarbamoyl group on adenosine at position 37 (t(6)A37) in tRNAs that read codons beginning with adenine. Is involved in the transfer of the threonylcarbamoyl moiety of threonylcarbamoyl-AMP (TC-AMP) to the N6 group of A37, together with TsaE and TsaB. TsaD likely plays a direct catalytic role in this reaction. The protein is tRNA N6-adenosine threonylcarbamoyltransferase of Salmonella schwarzengrund (strain CVM19633).